We begin with the raw amino-acid sequence, 211 residues long: Orotate phosphoribosyltransferase (211 aa).

Residues R103, K107, H109, and 129-137 (EDLISTGKS) contribute to the 5-phospho-alpha-D-ribose 1-diphosphate site. S133 contributes to the orotate binding site.

The protein belongs to the purine/pyrimidine phosphoribosyltransferase family. PyrE subfamily. Homodimer. Requires Mg(2+) as cofactor.

The enzyme catalyses orotidine 5'-phosphate + diphosphate = orotate + 5-phospho-alpha-D-ribose 1-diphosphate. It participates in pyrimidine metabolism; UMP biosynthesis via de novo pathway; UMP from orotate: step 1/2. Catalyzes the transfer of a ribosyl phosphate group from 5-phosphoribose 1-diphosphate to orotate, leading to the formation of orotidine monophosphate (OMP). The chain is Orotate phosphoribosyltransferase from Fusobacterium nucleatum subsp. nucleatum (strain ATCC 25586 / DSM 15643 / BCRC 10681 / CIP 101130 / JCM 8532 / KCTC 2640 / LMG 13131 / VPI 4355).